The sequence spans 638 residues: Ubiquitin-associated and SH3 domain-containing protein B (638 aa).

At Ser-9 the chain carries Phosphoserine. Position 12 is a phosphothreonine (Thr-12). In terms of domain architecture, UBA spans 23 to 65 (TVKHGSALDVLLSMGFPRARAQKALASTGGRSVQAACDWLFSH). The region spanning 243-308 (ANHETLQVIY…PENYITKADE (66 aa)) is the SH3 domain. Residues 369 to 638 (GPQKRCLFVC…FNWRETLLQE (270 aa)) are protein tyrosine phosphatase. Arg-379 is a catalytic residue. His-380 serves as the catalytic Tele-phosphohistidine intermediate. The active site involves His-565.

As to quaternary structure, homodimer. Interacts with JAK2 (in vitro). Interacts with CBL. Part of a complex containing CBL and activated EGFR. Interacts with ubiquitin and with mono-ubiquitinated proteins. Interacts with ZAP70 (ubiquitinated form). Detected in splenic T-cells and B-cells, total spleen, skeletal muscle, heart, lung, kidney, thymus, brain and liver (at protein level). Highly expressed in brain. Detected in heart, spleen, lung, liver, kidney and testis.

Its subcellular location is the cytoplasm. It localises to the nucleus. The catalysed reaction is O-phospho-L-tyrosyl-[protein] + H2O = L-tyrosyl-[protein] + phosphate. In terms of biological role, interferes with CBL-mediated down-regulation and degradation of receptor-type tyrosine kinases. Promotes accumulation of activated target receptors, such as T-cell receptors and EGFR, on the cell surface. Exhibits tyrosine phosphatase activity toward several substrates including EGFR, FAK, SYK, and ZAP70. Down-regulates proteins that are dually modified by both protein tyrosine phosphorylation and ubiquitination. The polypeptide is Ubiquitin-associated and SH3 domain-containing protein B (Ubash3b) (Mus musculus (Mouse)).